We begin with the raw amino-acid sequence, 261 residues long: Shikimate dehydrogenase (NADP(+)) (261 aa).

Residues 13–15 (SLS) and threonine 60 contribute to the shikimate site. The active-site Proton acceptor is the lysine 64. An NADP(+)-binding site is contributed by glutamate 76. The shikimate site is built by asparagine 85 and aspartate 100. Residues 122-126 (GAGGA), 143-148 (NRTVER), and isoleucine 203 contribute to the NADP(+) site. Residue tyrosine 205 participates in shikimate binding. Glycine 226 serves as a coordination point for NADP(+).

The protein belongs to the shikimate dehydrogenase family. As to quaternary structure, homodimer.

It carries out the reaction shikimate + NADP(+) = 3-dehydroshikimate + NADPH + H(+). Its pathway is metabolic intermediate biosynthesis; chorismate biosynthesis; chorismate from D-erythrose 4-phosphate and phosphoenolpyruvate: step 4/7. In terms of biological role, involved in the biosynthesis of the chorismate, which leads to the biosynthesis of aromatic amino acids. Catalyzes the reversible NADPH linked reduction of 3-dehydroshikimate (DHSA) to yield shikimate (SA). This Exiguobacterium sp. (strain ATCC BAA-1283 / AT1b) protein is Shikimate dehydrogenase (NADP(+)).